Here is a 137-residue protein sequence, read N- to C-terminus: MSFLKEFREFAMRGNVVDLAVGVIIGAAFGKIVSSLVADIIMPPLGLLIGGIDFKQFAVTLRDAQGDVPAVVMHYGVFIQNVFDFIIVAFAIFMAIKLMNKLNRKKEEAPAAPPAPSKEEVLLSEIRDLLKEQNNRS.

The next 2 membrane-spanning stretches (helical) occupy residues 10–30 (FAMR…AAFG) and 76–96 (GVFI…FMAI).

The protein belongs to the MscL family. As to quaternary structure, homopentamer.

It localises to the cell inner membrane. In terms of biological role, channel that opens in response to stretch forces in the membrane lipid bilayer. May participate in the regulation of osmotic pressure changes within the cell. The protein is Large-conductance mechanosensitive channel of Klebsiella pneumoniae subsp. pneumoniae (strain ATCC 700721 / MGH 78578).